We begin with the raw amino-acid sequence, 383 residues long: S-adenosylmethionine synthase (383 aa).

An ATP-binding site is contributed by His-15. A Mg(2+)-binding site is contributed by Asp-17. Glu-43 serves as a coordination point for K(+). L-methionine-binding residues include Glu-56 and Gln-99. Positions 99–109 (QSPDINQGVDR) are flexible loop. ATP is bound by residues 164-166 (DAK), 230-231 (RF), Asp-239, 245-246 (RK), Ala-262, and Lys-266. Asp-239 lines the L-methionine pocket. Lys-270 lines the L-methionine pocket.

The protein belongs to the AdoMet synthase family. Homotetramer; dimer of dimers. Mg(2+) serves as cofactor. It depends on K(+) as a cofactor.

It is found in the cytoplasm. The catalysed reaction is L-methionine + ATP + H2O = S-adenosyl-L-methionine + phosphate + diphosphate. Its pathway is amino-acid biosynthesis; S-adenosyl-L-methionine biosynthesis; S-adenosyl-L-methionine from L-methionine: step 1/1. Its function is as follows. Catalyzes the formation of S-adenosylmethionine (AdoMet) from methionine and ATP. The overall synthetic reaction is composed of two sequential steps, AdoMet formation and the subsequent tripolyphosphate hydrolysis which occurs prior to release of AdoMet from the enzyme. In Actinobacillus pleuropneumoniae serotype 7 (strain AP76), this protein is S-adenosylmethionine synthase.